The chain runs to 404 residues: Phosphopentomutase (404 aa).

Mn(2+) contacts are provided by Asp-10, Asp-303, His-308, Asp-344, His-345, and His-356.

Belongs to the phosphopentomutase family. The cofactor is Mn(2+).

Its subcellular location is the cytoplasm. It carries out the reaction 2-deoxy-alpha-D-ribose 1-phosphate = 2-deoxy-D-ribose 5-phosphate. The enzyme catalyses alpha-D-ribose 1-phosphate = D-ribose 5-phosphate. The protein operates within carbohydrate degradation; 2-deoxy-D-ribose 1-phosphate degradation; D-glyceraldehyde 3-phosphate and acetaldehyde from 2-deoxy-alpha-D-ribose 1-phosphate: step 1/2. In terms of biological role, isomerase that catalyzes the conversion of deoxy-ribose 1-phosphate (dRib-1-P) and ribose 1-phosphate (Rib-1-P) to deoxy-ribose 5-phosphate (dRib-5-P) and ribose 5-phosphate (Rib-5-P), respectively. The sequence is that of Phosphopentomutase from Shewanella oneidensis (strain ATCC 700550 / JCM 31522 / CIP 106686 / LMG 19005 / NCIMB 14063 / MR-1).